We begin with the raw amino-acid sequence, 482 residues long: Hydrogenase transcriptional regulatory protein HoxA (482 aa).

The 115-residue stretch at 7–121 (TVLVVDDETR…HLIDTVRQAV (115 aa)) folds into the Response regulatory domain. Asp-55 bears the 4-aspartylphosphate mark. A Sigma-54 factor interaction domain is found at 167-394 (APGSPLDAVC…LRNEIYRAVA (228 aa)). Residues 193–200 (GESGTGKE) and 265–274 (EIGDTSPAFQ) contribute to the ATP site. A DNA-binding region (H-T-H motif) is located at residues 456–475 (KTHAAKELGLSRVGLRQKLL).

It localises to the cytoplasm. In terms of biological role, probable member of the two-component regulatory system involved in the regulation of the hydrogenase activity. HoxA is probably phosphorylated by a sensory component (which could be HoxX) and then acts in conjunction with sigma-54 as a transcriptional activator. The chain is Hydrogenase transcriptional regulatory protein HoxA (hoxA) from Cupriavidus necator (strain ATCC 17699 / DSM 428 / KCTC 22496 / NCIMB 10442 / H16 / Stanier 337) (Ralstonia eutropha).